A 160-amino-acid polypeptide reads, in one-letter code: Endoribonuclease YbeY (160 aa).

3 residues coordinate Zn(2+): His-111, His-115, and His-121.

It belongs to the endoribonuclease YbeY family. Zn(2+) serves as cofactor.

The protein localises to the cytoplasm. Functionally, single strand-specific metallo-endoribonuclease involved in late-stage 70S ribosome quality control and in maturation of the 3' terminus of the 16S rRNA. In Stutzerimonas stutzeri (strain A1501) (Pseudomonas stutzeri), this protein is Endoribonuclease YbeY.